The sequence spans 600 residues: DNA ligase (600 aa).

D259 contacts ATP. K261 serves as the catalytic N6-AMP-lysine intermediate. Residues R266, R281, E311, F351, R428, and K434 each contribute to the ATP site.

Belongs to the ATP-dependent DNA ligase family. Mg(2+) is required as a cofactor.

The catalysed reaction is ATP + (deoxyribonucleotide)n-3'-hydroxyl + 5'-phospho-(deoxyribonucleotide)m = (deoxyribonucleotide)n+m + AMP + diphosphate.. Its function is as follows. DNA ligase that seals nicks in double-stranded DNA during DNA replication, DNA recombination and DNA repair. This is DNA ligase from Acidianus ambivalens (Desulfurolobus ambivalens).